The primary structure comprises 634 residues: MSTEFVFVDHQAAQASVRQKPKLSRRRGACENCKRRKVRCSGANPCEQCLKVNVHCWYIGNNQSRRRSVPNSGADKNNQQGDTDRHNGARLGLESFGHLHFFSESFLDAQSIPMDQPPGSSPVMDFDPYDYDASPLSMSNEQTALIDWDQLEATSNYVALGISANSGNNFIADQCFSETRTATNRASKDPLNGGCHNTLHTGEFTHDSRTVDELLNDSIPLAFAASTKSSLSFDYVRSSLHSWLLTAMTELDGDENRHILQTFERLLNANSPVIRHPSLNEDVNSIEILNSLRSESSQNRALVYRCIDACFSNPNRVGIFLDRMTVEELVCQVLAHPFVSSPISIALCLSFLAVGSRDLSLDDDCREMNAMNLFRTALYIRPNPSSGPSLWTFQALLLMAHFSCDIGAESTTSLMTDTATCVQALRLHSSAAISNLCSSDSERVNLKRAFWTFFAVEKLHCIQEGLFPLIHGEYADHKVAAPQDPLCRRYDCLYSDVGYAKICSKILQQLQGQQDISQVGSSCCGRESYKQSPAFTANRLETMLMEWKGNLPFDGDGKNIFTATSPGERRIRLTCINMYHFAMIAIHSLPGVEDTDASKRQRCESAREILDMSEHITSADLLYDWSVPPLCPDC.

The zn(2)-C6 fungal-type DNA-binding region spans 30–56; sequence CENCKRRKVRCSGANPCEQCLKVNVHC. A disordered region spans residues 66–89; it reads RRSVPNSGADKNNQQGDTDRHNGA. The span at 69-81 shows a compositional bias: polar residues; it reads VPNSGADKNNQQG.

The protein localises to the nucleus. Functionally, transcription factor that regulates the expression of the gene cluster that mediates the biosynthesis of AAL-toxins, sphinganine-analog mycotoxins responsible for Alternaria stem canker on tomato by the tomato pathotype. The chain is AAl-toxin cluster-specific transcription factor ALT13 from Alternaria alternata (Alternaria rot fungus).